The sequence spans 507 residues: uncharacterized protein (507 aa).

Helical transmembrane passes span 8–28 (VKGV…AYLV), 41–61 (VGLF…RAFG), 86–106 (IVFV…LVVI), 130–150 (INIL…VAFF), 171–191 (ILSV…HNAY), 193–213 (PSVS…YIVV), 235–255 (LFSY…LGYL), 275–295 (VAMP…AVLF), 323–343 (IIVT…INIL), 355–375 (IQIL…FNIL), 387–407 (ILYI…PKFG), 408–428 (IIGA…FQIW), 444–464 (ILVI…KDLI), and 467–487 (VILQ…LGIF).

It belongs to the polysaccharide synthase family.

It is found in the cell membrane. This is an uncharacterized protein from Methanocaldococcus jannaschii (strain ATCC 43067 / DSM 2661 / JAL-1 / JCM 10045 / NBRC 100440) (Methanococcus jannaschii).